The following is a 315-amino-acid chain: Prephenate dehydratase (315 aa).

In terms of domain architecture, Prephenate dehydratase spans 3 to 189 (RIAYLGPEGT…ARTRFLLIGV (187 aa)). The ACT domain maps to 203-280 (SAVLRIANVP…ADVRYLGSWP (78 aa)).

Homodimer.

It carries out the reaction prephenate + H(+) = 3-phenylpyruvate + CO2 + H2O. It functions in the pathway amino-acid biosynthesis; L-phenylalanine biosynthesis; phenylpyruvate from prephenate: step 1/1. This is Prephenate dehydratase (pheA) from Mycobacterium ulcerans (strain Agy99).